We begin with the raw amino-acid sequence, 214 residues long: Osteoclast-stimulating factor 1 (214 aa).

The SH3 domain maps to G12–E71. ANK repeat units follow at residues S72–G101, A105–Q135, and L139–L168.

It localises to the cytoplasm. In terms of biological role, induces bone resorption, acting probably through a signaling cascade which results in the secretion of factor(s) enhancing osteoclast formation and activity. This Xenopus laevis (African clawed frog) protein is Osteoclast-stimulating factor 1 (ostf1).